Here is a 440-residue protein sequence, read N- to C-terminus: MSYNYFGKKILILGMGLTGISCINFFLKKGIKPKIIDESKHPSNFIKIPQNIEYSLGSLDHQWILESDLIVISPGISSFKPILIKARLLGIEIISDIELFSREVTCPIISITGTNGKSTVATMIEKIAKKSGYKAFLGGNIGVPVLEILDKEADLYIIELSSFQLENTFNLKSKIAVILNISEDHINRYPNGFQQYKNTKLSVYNQAEICIINSNDKIEKSLIHSKNKKWISFGTNRSDYRICSKSNDPILFFKNKKILNTSEILLYGYHNYNNILVSLAISDAMQFPRNDAINVLKSFSNLPHRFQIIKNEKGVRWINDSKSTNVNSTQVALNSIKTTGTIRLLLGGDSKSANFNILKNIFRTLKIKIYCFGRDGIKLSKICEKKSIYVENLKKAVILISKQVKSGDTVLLSPGCSSLDQFSNFEERGNLFIKLIKEIT.

Residue 113 to 119 (GTNGKST) participates in ATP binding.

The protein belongs to the MurCDEF family.

Its subcellular location is the cytoplasm. The catalysed reaction is UDP-N-acetyl-alpha-D-muramoyl-L-alanine + D-glutamate + ATP = UDP-N-acetyl-alpha-D-muramoyl-L-alanyl-D-glutamate + ADP + phosphate + H(+). Its pathway is cell wall biogenesis; peptidoglycan biosynthesis. Its function is as follows. Cell wall formation. Catalyzes the addition of glutamate to the nucleotide precursor UDP-N-acetylmuramoyl-L-alanine (UMA). The chain is UDP-N-acetylmuramoylalanine--D-glutamate ligase from Buchnera aphidicola subsp. Acyrthosiphon pisum (strain Tuc7).